The following is a 165-amino-acid chain: Putative defense protein Hdd11 (165 aa).

Positions Met1–Gly17 are cleaved as a signal peptide. The 148-residue stretch at Tyr18 to Ser165 folds into the Reelin domain. Cys27 and Cys104 are oxidised to a cystine.

It belongs to the insect defense protein family.

It localises to the secreted. Its function is as follows. As this protein is expressed upon bacterial infection, it may have antimicrobial activity. This chain is Putative defense protein Hdd11, found in Hyphantria cunea (Fall webworm moth).